Here is a 292-residue protein sequence, read N- to C-terminus: Potassium channel, subfamily K, member 16 (292 aa).

The Cytoplasmic segment spans residues 1–13; sequence MPRAGVCGCWGGQ. Residues 14-34 traverse the membrane as a helical segment; sequence VLPLLLAYICYLLLGATIFQL. The segment at residues 98 to 116 is an intramembrane region (pore-forming); the sequence is SFFFAGTVVTTIGYGNLAP. Residues Thr108, Ile109, Gly110, and Tyr111 each coordinate K(+). The tract at residues 108–113 is selectivity filter 1; the sequence is TIGYGN. The helical transmembrane segment at 120–140 threads the bilayer; that stretch reads AGQVFCVFYALMGIPLNVVFL. The Cytoplasmic segment spans residues 141–165; it reads NHLGTGLRAHLTTLDRWEDHPRHSQ. The chain crosses the membrane as a helical span at residues 166-186; the sequence is LLQVLGLALFLTLGTLVILIF. The pore-forming intramembrane region spans 202-221; it reads GFYFAFITLSTIGFGDYVVG. Residues Thr212, Ile213, Gly214, and Phe215 each contribute to the K(+) site. A selectivity filter 2 region spans residues 212–217; the sequence is TIGFGD. A helical membrane pass occupies residues 238-258; the sequence is IWILLGLAWLAVVLSLGSLLL. Over 259 to 292 the chain is Cytoplasmic; sequence HRCSRLWQLIRGLDLKDGAAPDSEPRSQKIPISA.

The protein belongs to the two pore domain potassium channel (TC 1.A.1.8) family. Homodimer; disulfide-linked. Heterodimer with KCNK17 and KCNK5. Expressed in pacreatic beta-cells (at protein level). Expressed in pacreatic delta-cells (at protein level).

The protein resides in the cell membrane. It is found in the endoplasmic reticulum membrane. Its subcellular location is the mitochondrion inner membrane. The enzyme catalyses K(+)(in) = K(+)(out). It carries out the reaction Rb(+)(in) = Rb(+)(out). The catalysed reaction is Cs(+)(in) = Cs(+)(out). Functionally, k(+) channel that conducts voltage-dependent outward rectifying currents upon membrane depolarization. Voltage sensing is coupled to K(+) electrochemical gradient in an 'ion flux gating' mode where outward but not inward ion flow opens the gate. Homo- and heterodimerizes to form functional channels with distinct regulatory and gating properties. In pancreatic islets, conducts K(+) countercurrents for Ca(2+) release from the endoplasmic reticulum (ER) and regulates the frequency and duration of cytosolic Ca(2+) oscillations coupled to secretion of pancreatic hormones. In pancreatic beta cells, drives ER Ca(2+) efflux, which in turn activates Ca(2+)-dependent plasma membrane K(+) slow currents and cytosolic Ca(2+) influx, overall contributing to synchronous cytosolic Ca(2+) oscillations. Limits glucose-induced cytosolic Ca(2+) oscillations coupled to second-phase INS secretion. Contributes to beta cell adaptation to acute inflammation by maintaining normal cytosolic Ca(2+) levels and INS secretion. May regulate beta cell mitochondrial Ca(2+) levels either indirectly via ER Ca(2+) efflux or directly by hyperpolarizing the mitochondrial membrane potential. Limits mitochondrial Ca(2+) oscillations and ATP production involved in glucose homeostasis upon metabolic stress. In pancreatic delta cells, limits Ca(2+)-induced Ca(2+)-release involved in somatostatin secretion and modulates islet paracrine signaling involved in glucagon secretion. Permeable to other monovalent cations such as Rb(+) and Cs(+). In Mus musculus (Mouse), this protein is Potassium channel, subfamily K, member 16.